Consider the following 84-residue polypeptide: Putative defensin-like protein 114 (84 aa).

Positions 1 to 24 are cleaved as a signal peptide; it reads MAITKKCFAAFVLILLFVMPFVYC. 4 disulfide bridges follow: Cys-41–Cys-81, Cys-47–Cys-69, Cys-54–Cys-79, and Cys-58–Cys-80.

This sequence belongs to the DEFL family.

It is found in the secreted. The polypeptide is Putative defensin-like protein 114 (Arabidopsis thaliana (Mouse-ear cress)).